Consider the following 574-residue polypeptide: MDKYDKIIDLTKRRGFLWNSFEIYGGIAGFFDYGPLGAILKNNVINTWRKHYIVNEGFYEIDSPTVTPYEVLKASGHVENFTDPLVECKECLESFRADHIIEENVDVDTEGKTLQELQEMIEKNNIKCPKCGGEFKEVSTFNLMFATSIGPGGKRAAFMRPETAQGIFIQFKRISQFFRNKLPFGAVQIGKAYRNEISPRQGVIRLREFTQAEGEFFIDSRKKENFEKFESVKDMVLPLLPGKNQENESLSAEEKIVRMSLSDAVKNGVIAHEAIAYYVAVTKKFLMEIGIDESKLRFRQHLPNEMAHYAADCWDAELYTDRYGWIECVGIADRTNYDLLAHMKNSSEDLSVFVELDEDKEVEVYEIELNYKLVGRTFKGDAKILEESLKELNDKKMEELVEALETEGKYVLKTCKRDFEILKEYLTAKKVKKIVKGEKIIPHVIEPSYGIDRITYCVMEHAFKEEEDRTVMGFSNAVSPIKVGVFPLVNKEGMPEIAMDLKNKLRENGLIAEYDDSGAIGRRYMRMDEVGTPFCVTIDGETLTDRSVTIRERDSREQFRIPINEVVSYIKDKL.

The substrate site is built by Arg-96 and Glu-162. ATP contacts are provided by residues Arg-194–Glu-196, Ile-204–Phe-209, Glu-327–Cys-328, and Gly-450–Arg-453. Residue Phe-209–Glu-213 participates in substrate binding. Glu-446–Gly-450 provides a ligand contact to substrate.

This sequence belongs to the class-II aminoacyl-tRNA synthetase family.

It localises to the cytoplasm. It catalyses the reaction tRNA(Gly) + glycine + ATP = glycyl-tRNA(Gly) + AMP + diphosphate. Its function is as follows. Catalyzes the attachment of glycine to tRNA(Gly). The protein is Glycine--tRNA ligase of Methanococcus maripaludis (strain C7 / ATCC BAA-1331).